A 559-amino-acid polypeptide reads, in one-letter code: Dihydroxy-acid dehydratase (559 aa).

[2Fe-2S] cluster is bound at residue Cys52. Asp84 is a Mg(2+) binding site. Residue Cys125 participates in [2Fe-2S] cluster binding. Mg(2+)-binding residues include Asp126 and Lys127. The residue at position 127 (Lys127) is an N6-carboxylysine. Cys197 contributes to the [2Fe-2S] cluster binding site. Glu447 serves as a coordination point for Mg(2+). Ser473 acts as the Proton acceptor in catalysis.

Belongs to the IlvD/Edd family. As to quaternary structure, homodimer. It depends on [2Fe-2S] cluster as a cofactor. Requires Mg(2+) as cofactor.

The catalysed reaction is (2R)-2,3-dihydroxy-3-methylbutanoate = 3-methyl-2-oxobutanoate + H2O. The enzyme catalyses (2R,3R)-2,3-dihydroxy-3-methylpentanoate = (S)-3-methyl-2-oxopentanoate + H2O. Its pathway is amino-acid biosynthesis; L-isoleucine biosynthesis; L-isoleucine from 2-oxobutanoate: step 3/4. It participates in amino-acid biosynthesis; L-valine biosynthesis; L-valine from pyruvate: step 3/4. In terms of biological role, functions in the biosynthesis of branched-chain amino acids. Catalyzes the dehydration of (2R,3R)-2,3-dihydroxy-3-methylpentanoate (2,3-dihydroxy-3-methylvalerate) into 2-oxo-3-methylpentanoate (2-oxo-3-methylvalerate) and of (2R)-2,3-dihydroxy-3-methylbutanoate (2,3-dihydroxyisovalerate) into 2-oxo-3-methylbutanoate (2-oxoisovalerate), the penultimate precursor to L-isoleucine and L-valine, respectively. The sequence is that of Dihydroxy-acid dehydratase from Roseiflexus castenholzii (strain DSM 13941 / HLO8).